Reading from the N-terminus, the 129-residue chain is UPF0344 protein SAR0931 (129 aa).

A run of 4 helical transmembrane segments spans residues Met1 to Leu21, Leu36 to Ile56, Met67 to Ile87, and Met99 to Leu119.

This sequence belongs to the UPF0344 family.

Its subcellular location is the cell membrane. In Staphylococcus aureus (strain MRSA252), this protein is UPF0344 protein SAR0931.